The chain runs to 1432 residues: Gag-Pol polyprotein (1432 aa).

2 CCHC-type zinc fingers span residues 368–385 and 386–403; these read QRCY…DCKN and QKCF…NCKS. Residues 452–525 form the Peptidase A2 domain; the sequence is VRALIDTGAD…TPVNLLGRSV (74 aa). The For protease activity; shared with dimeric partner role is filled by aspartate 457. The Reverse transcriptase domain maps to 579-766; that stretch reads DGKISRTPWD…EQVQWLGYEL (188 aa). The Mg(2+) site is built by aspartate 645, aspartate 720, and aspartate 721. Residues 815-843 adopt a coiled-coil conformation; that stretch reads KGKTDLKDKIKLTEEAIQCLETVNKRLKD. An RNase H type-1 domain is found at 959–1079; it reads IERYPTYYTD…VDQEVQKALQ (121 aa). Residues aspartate 968, glutamate 999, aspartate 1019, and aspartate 1071 each contribute to the Mg(2+) site. An Integrase-type zinc finger spans residues 1157 to 1198; the sequence is EAIPQAIEEHEKWHTTAEILAREFQLPRRVAREIVHRCQACK. Positions 1166, 1170, 1194, and 1197 each coordinate Zn(2+). An Integrase catalytic domain is found at 1206 to 1358; it reads RGTNPRERFL…TPYEIYLESE (153 aa). Positions 1219 and 1271 each coordinate Mg(2+). The segment at residues 1376 to 1422 is a DNA-binding region (integrase-type); it reads KWAYVRDKRKVWKGPYKVLWDGEGAAVVEENAMPTLYPHRHMRFIPP.

Post-translationally, specific enzymatic cleavages by the viral protease yield mature proteins. The protease is released by autocatalytic cleavage. The polyprotein is cleaved during and after budding, this process is termed maturation.

It localises to the virion. The catalysed reaction is DNA(n) + a 2'-deoxyribonucleoside 5'-triphosphate = DNA(n+1) + diphosphate. It catalyses the reaction Endohydrolysis of RNA in RNA/DNA hybrids. Three different cleavage modes: 1. sequence-specific internal cleavage of RNA. Human immunodeficiency virus type 1 and Moloney murine leukemia virus enzymes prefer to cleave the RNA strand one nucleotide away from the RNA-DNA junction. 2. RNA 5'-end directed cleavage 13-19 nucleotides from the RNA end. 3. DNA 3'-end directed cleavage 15-20 nucleotides away from the primer terminus.. The enzyme catalyses 3'-end directed exonucleolytic cleavage of viral RNA-DNA hybrid.. In terms of biological role, matrix protein p16 forms the outer shell of the core of the virus, lining the inner surface of the viral membrane. Capsid protein p26 forms the conical core of the virus that encapsulates the genomic RNA-nucleocapsid complex. Its function is as follows. The aspartyl protease mediates proteolytic cleavages of Gag and Gag-Pol polyproteins during or shortly after the release of the virion from the plasma membrane. Cleavages take place as an ordered, step-wise cascade to yield mature proteins. This process is called maturation. Displays maximal activity during the budding process just prior to particle release from the cell. Functionally, reverse transcriptase/ribonuclease H (RT) is a multifunctional enzyme that converts the viral RNA genome into dsDNA in the cytoplasm, shortly after virus entry into the cell. This enzyme displays a DNA polymerase activity that can copy either DNA or RNA templates, and a ribonuclease H (RNase H) activity that cleaves the RNA strand of RNA-DNA heteroduplexes in a partially processive 3' to 5' endonucleasic mode. Conversion of viral genomic RNA into dsDNA requires many steps. A tRNA binds to the primer-binding site (PBS) situated at the 5'-end of the viral RNA. RT uses the 3' end of the tRNA primer to perform a short round of RNA-dependent minus-strand DNA synthesis. The reading proceeds through the U5 region and ends after the repeated (R) region which is present at both ends of viral RNA. The portion of the RNA-DNA heteroduplex is digested by the RNase H, resulting in a ssDNA product attached to the tRNA primer. This ssDNA/tRNA hybridizes with the identical R region situated at the 3' end of viral RNA. This template exchange, known as minus-strand DNA strong stop transfer, can be either intra- or intermolecular. RT uses the 3' end of this newly synthesized short ssDNA to perform the RNA-dependent minus-strand DNA synthesis of the whole template. RNase H digests the RNA template except for a polypurine tract (PPT) situated at the 5'-end of the genome. It is not clear if both polymerase and RNase H activities are simultaneous. RNase H probably can proceed both in a polymerase-dependent (RNA cut into small fragments by the same RT performing DNA synthesis) and a polymerase-independent mode (cleavage of remaining RNA fragments by free RTs). Secondly, RT performs DNA-directed plus-strand DNA synthesis using the PPT that has not been removed by RNase H as primer. PPT and tRNA primers are then removed by RNase H. The 3' and 5' ssDNA PBS regions hybridize to form a circular dsDNA intermediate. Strand displacement synthesis by RT to the PBS and PPT ends produces a blunt ended, linear dsDNA copy of the viral genome that includes long terminal repeats (LTRs) at both ends. In terms of biological role, integrase catalyzes viral DNA integration into the host chromosome, by performing a series of DNA cutting and joining reactions. This enzyme activity takes place after virion entry into a cell and reverse transcription of the RNA genome in dsDNA. This chain is Gag-Pol polyprotein (gag-pol), found in Jembrana disease virus (JDV).